We begin with the raw amino-acid sequence, 181 residues long: ATP synthase subunit b (181 aa).

A helical membrane pass occupies residues 23–43; it reads FIHIPTFIYTALNLVILYFIL.

This sequence belongs to the ATPase B chain family. As to quaternary structure, F-type ATPases have 2 components, F(1) - the catalytic core - and F(0) - the membrane proton channel. F(1) has five subunits: alpha(3), beta(3), gamma(1), delta(1), epsilon(1). F(0) has three main subunits: a(1), b(2) and c(10-14). The alpha and beta chains form an alternating ring which encloses part of the gamma chain. F(1) is attached to F(0) by a central stalk formed by the gamma and epsilon chains, while a peripheral stalk is formed by the delta and b chains.

The protein resides in the cell membrane. Functionally, f(1)F(0) ATP synthase produces ATP from ADP in the presence of a proton or sodium gradient. F-type ATPases consist of two structural domains, F(1) containing the extramembraneous catalytic core and F(0) containing the membrane proton channel, linked together by a central stalk and a peripheral stalk. During catalysis, ATP synthesis in the catalytic domain of F(1) is coupled via a rotary mechanism of the central stalk subunits to proton translocation. Component of the F(0) channel, it forms part of the peripheral stalk, linking F(1) to F(0). This Acetivibrio thermocellus (strain ATCC 27405 / DSM 1237 / JCM 9322 / NBRC 103400 / NCIMB 10682 / NRRL B-4536 / VPI 7372) (Clostridium thermocellum) protein is ATP synthase subunit b.